The primary structure comprises 402 residues: Methylthioribose-1-phosphate isomerase (402 aa).

The Proton donor role is filled by Asp275.

Belongs to the eIF-2B alpha/beta/delta subunits family. MtnA subfamily.

The protein resides in the cytoplasm. The protein localises to the nucleus. The catalysed reaction is 5-(methylsulfanyl)-alpha-D-ribose 1-phosphate = 5-(methylsulfanyl)-D-ribulose 1-phosphate. It functions in the pathway amino-acid biosynthesis; L-methionine biosynthesis via salvage pathway; L-methionine from S-methyl-5-thio-alpha-D-ribose 1-phosphate: step 1/6. Its function is as follows. Catalyzes the interconversion of methylthioribose-1-phosphate (MTR-1-P) into methylthioribulose-1-phosphate (MTRu-1-P). The protein is Methylthioribose-1-phosphate isomerase of Clavispora lusitaniae (strain ATCC 42720) (Yeast).